Reading from the N-terminus, the 399-residue chain is Galactokinase (399 aa).

42–45 is a substrate binding site; the sequence is EHTD. ATP-binding positions include Ser-76 and 133–139; that span reads ASGLSSS. Residues Ser-139 and Glu-171 each contribute to the Mg(2+) site. Asp-183 acts as the Proton acceptor in catalysis. Tyr-233 provides a ligand contact to substrate.

It belongs to the GHMP kinase family. GalK subfamily. In terms of assembly, monomer.

The protein localises to the cytoplasm. The catalysed reaction is alpha-D-galactose + ATP = alpha-D-galactose 1-phosphate + ADP + H(+). It participates in carbohydrate metabolism; galactose metabolism. In terms of biological role, catalyzes the transfer of the gamma-phosphate of ATP to D-galactose to form alpha-D-galactose-1-phosphate (Gal-1-P). The chain is Galactokinase from Lactococcus lactis subsp. lactis (strain IL1403) (Streptococcus lactis).